A 749-amino-acid polypeptide reads, in one-letter code: Cytosolic phospholipase A2 (749 aa).

Residues 1-178 (MSFIDPYQHI…MKKLLGPKNS (178 aa)) form a phospholipid binding region. Serine 2 carries the post-translational modification Phosphoserine. Positions 6 to 122 (PYQHIIVEHQ…KVGEKKEVPF (117 aa)) constitute a C2 domain. Ca(2+) is bound by residues aspartate 40, threonine 41, aspartate 43, asparagine 65, aspartate 93, alanine 94, and asparagine 95. A PLA2c domain is found at 140 to 740 (SCPDLRFSMA…SNVEARRFFN (601 aa)). Catalysis depends on serine 228, which acts as the Nucleophile. A Phosphothreonine modification is found at threonine 268. Positions 409–457 (GSQSRGSTMEEELENITTKHIVSNDSSDSDDESHEPKGTENEDAGSDYQ) are disordered. A phosphoserine mark is found at serine 434, serine 435, and serine 437. Residue serine 505 is modified to Phosphoserine; by MAPK. Serine 515 bears the Phosphoserine mark. A Glycyl lysine isopeptide (Lys-Gly) (interchain with G-Cter in SUMO2) cross-link involves residue lysine 541. The active-site Proton acceptor is the aspartate 549. Residue lysine 606 forms a Glycyl lysine isopeptide (Lys-Gly) (interchain with G-Cter in SUMO2) linkage. Residues serine 727 and serine 729 each carry the phosphoserine modification.

In terms of assembly, interacts with KAT5. In terms of processing, phosphorylated at both Ser-505 and Ser-727 in response to mitogenic stimuli.

It localises to the cytoplasm. Its subcellular location is the golgi apparatus membrane. It is found in the nucleus envelope. It carries out the reaction a 1,2-diacyl-sn-glycero-3-phosphocholine + H2O = a 1-acyl-sn-glycero-3-phosphocholine + a fatty acid + H(+). The catalysed reaction is a 1-O-alkyl-2-acyl-sn-glycero-3-phosphocholine + H2O = a 1-O-alkyl-sn-glycero-3-phosphocholine + a fatty acid + H(+). It catalyses the reaction a 1-acyl-sn-glycero-3-phosphocholine + H2O = sn-glycerol 3-phosphocholine + a fatty acid + H(+). The enzyme catalyses 1-hexadecanoyl-2-(5Z,8Z,11Z,14Z-eicosatetraenoyl)-sn-glycero-3-phosphocholine + H2O = 1-hexadecanoyl-sn-glycero-3-phosphocholine + (5Z,8Z,11Z,14Z)-eicosatetraenoate + H(+). It carries out the reaction 1,2-di-(5Z,8Z,11Z,14Z-eicosatetraenoyl)-sn-glycero-3-phosphocholine + H2O = 1-(5Z,8Z,11Z,14Z-eicosatetraenoyl)-sn-glycero-3-phosphocholine + (5Z,8Z,11Z,14Z)-eicosatetraenoate + H(+). The catalysed reaction is 1-octadecanoyl-2-(5Z,8Z,11Z,14Z-eicosatetraenoyl)-sn-glycero-3-phosphocholine + H2O = 1-octadecanoyl-sn-glycero-3-phosphocholine + (5Z,8Z,11Z,14Z)-eicosatetraenoate + H(+). It catalyses the reaction 1-hexadecanoyl-2-(9Z,12Z-octadecadienoyl)-sn-glycero-3-phosphocholine + H2O = (9Z,12Z)-octadecadienoate + 1-hexadecanoyl-sn-glycero-3-phosphocholine + H(+). The enzyme catalyses 1-octadecanoyl-2-(9Z,12Z,15Z-octadecatrienoyl)-sn-glycero-3-phosphocholine + H2O = (9Z,12Z,15Z)-octadecatrienoate + 1-octadecanoyl-sn-glycero-3-phosphocholine + H(+). It carries out the reaction 1-(5Z,8Z,11Z,14Z-eicosatetraenoyl)-2-hexadecanoyl-sn-glycero-3-phosphocholine + H2O = 1-(5Z,8Z,11Z,14Z-eicosatetraenoyl)-sn-glycero-3-phosphocholine + hexadecanoate + H(+). The catalysed reaction is 1-O-hexadecyl-2-(5Z,8Z,11Z,14Z)-eicosatetraenoyl-sn-glycero-3-phosphocholine + H2O = 1-O-hexadecyl-sn-glycero-3-phosphocholine + (5Z,8Z,11Z,14Z)-eicosatetraenoate + H(+). It catalyses the reaction 1,2-di-(9Z-octadecenoyl)-sn-glycero-3-phospho-(1'-sn-glycerol) + H2O = 1-(9Z-octadecenoyl)-sn-glycero-3-phospho-(1'-sn-glycerol) + (9Z)-octadecenoate + H(+). The enzyme catalyses 1-octadecanoyl-2-(5Z,8Z,11Z,14Z-eicosatetraenoyl)-sn-glycero-3-phosphate + H2O = 1-octadecanoyl-sn-glycero-3-phosphate + (5Z,8Z,11Z,14Z)-eicosatetraenoate + H(+). It carries out the reaction 1-hexadecanoyl-sn-glycero-3-phosphocholine + H2O = sn-glycerol 3-phosphocholine + hexadecanoate + H(+). The catalysed reaction is 2-(prostaglandin E2)-sn-glycero-3-phosphoethanolamine + H2O = sn-glycero-3-phosphoethanolamine + prostaglandin E2 + H(+). It catalyses the reaction 2-[(15S)-hydroxy-(5Z,8Z,11Z,13E)-eicosatetraenoyl]-sn-glycero-3-phosphocholine + H2O = (15S)-hydroxy-(5Z,8Z,11Z,13E)-eicosatetraenoate + sn-glycerol 3-phosphocholine + H(+). The enzyme catalyses 2-[(15R)-hydroxy-(5Z,8Z,11Z,13E)-eicosatetraenoyl]-sn-glycero-3-phosphocholine + H2O = (15R)-hydroxy-(5Z,8Z,11Z,13E)-eicosatetraenoate + sn-glycerol 3-phosphocholine + H(+). It carries out the reaction 2-(prostaglandin E2)-sn-glycero-3-phosphocholine + H2O = prostaglandin E2 + sn-glycerol 3-phosphocholine + H(+). The catalysed reaction is 2-[(11R)-hydroxy-(5Z,8Z,12E,14Z)-eicosatetraenoyl]-sn-glycero-3-phosphocholine + H2O = (11R)-hydroxy-(5Z,8Z,12E,14Z)-eicosatetraenoate + sn-glycerol 3-phosphocholine + H(+). It catalyses the reaction 1-(5Z,8Z,11Z,14Z-eicosatetraenoyl)-2-O-hexadecyl-sn-glycero-3-phosphocholine + H2O = 2-O-hexadecyl-sn-glycero-3-phosphocholine + (5Z,8Z,11Z,14Z)-eicosatetraenoate + H(+). The enzyme catalyses 1-octadecanoyl-2-(5Z,8Z,11Z,14Z-eicosatetraenoyl)-sn-glycero-3-phosphocholine + glycerol = 1-(5Z,8Z,11Z,14Z-eicosatetraenoyl)-glycerol + 1-octadecanoyl-sn-glycero-3-phosphocholine. It carries out the reaction 1-octadecanoyl-2-(9Z,12Z,15Z-octadecatrienoyl)-sn-glycero-3-phosphocholine + glycerol = 1-(9Z,12Z,15Z-octadecatrienoyl)-glycerol + 1-octadecanoyl-sn-glycero-3-phosphocholine. It participates in membrane lipid metabolism; glycerophospholipid metabolism. Its pathway is lipid metabolism; arachidonate metabolism. The protein operates within lipid metabolism; prostaglandin biosynthesis. It functions in the pathway lipid metabolism; leukotriene B4 biosynthesis. With respect to regulation, activated by cytosolic calcium, which is necessary for binding to membrane lipids. Activated by phosphorylation in response to mitogenic stimuli. Functionally, has primarily calcium-dependent phospholipase and lysophospholipase activities, with a major role in membrane lipid remodeling and biosynthesis of lipid mediators of the inflammatory response. Plays an important role in embryo implantation and parturition through its ability to trigger prostanoid production. Preferentially hydrolyzes the ester bond of the fatty acyl group attached at sn-2 position of phospholipids (phospholipase A2 activity). Selectively hydrolyzes sn-2 arachidonoyl group from membrane phospholipids, providing the precursor for eicosanoid biosynthesis via the cyclooxygenase pathway. In an alternative pathway of eicosanoid biosynthesis, hydrolyzes sn-2 fatty acyl chain of eicosanoid lysophopholipids to release free bioactive eicosanoids. Hydrolyzes the ester bond of the fatty acyl group attached at sn-1 position of phospholipids (phospholipase A1 activity) only if an ether linkage rather than an ester linkage is present at the sn-2 position. This hydrolysis is not stereospecific. Has calcium-independent phospholipase A2 and lysophospholipase activities in the presence of phosphoinositides. Has O-acyltransferase activity. Catalyzes the transfer of fatty acyl chains from phospholipids to a primary hydroxyl group of glycerol (sn-1 or sn-3), potentially contributing to monoacylglycerol synthesis. This chain is Cytosolic phospholipase A2 (PLA2G4A), found in Pongo abelii (Sumatran orangutan).